Consider the following 237-residue polypeptide: Concanavalin-A (237 aa).

The Mn(2+) site is built by Glu8 and Asp10. Residues Asp10, Tyr12, Asn14, and Asp19 each coordinate Ca(2+). Tyr12 contributes to the a carbohydrate binding site. Residues Asp19 and His24 each contribute to the Mn(2+) site. An a carbohydrate-binding site is contributed by 99–100; that stretch reads LY. Ca(2+) is bound at residue Asp208. Position 228 (Arg228) interacts with a carbohydrate.

Belongs to the leguminous lectin family. As to quaternary structure, homotetramer.

Glucose/D-mannose specific lectin. The protein is Concanavalin-A of Canavalia lineata (Beach bean).